A 579-amino-acid chain; its full sequence is Laccase-24 (579 aa).

Residues 1-23 form the signal peptide; sequence MARSWSLLLLPFALALVASVAQA. Plastocyanin-like domains lie at 31-148 and 159-322; these read NVGN…PRGG and EEVV…YGGG. N-linked (GlcNAc...) asparagine glycans are attached at residues asparagine 34 and asparagine 78. Positions 82 and 84 each coordinate Cu cation. Asparagine 110 and asparagine 116 each carry an N-linked (GlcNAc...) asparagine glycan. Cu cation-binding residues include histidine 127 and histidine 129. N-linked (GlcNAc...) asparagine glycans are attached at residues asparagine 204, asparagine 209, asparagine 219, asparagine 241, asparagine 312, asparagine 337, asparagine 348, asparagine 398, asparagine 405, asparagine 444, and asparagine 462. The region spanning 425–563 is the Plastocyanin-like 3 domain; sequence DFPDTPPIVF…GMVFEVQNGP (139 aa). 3 residues coordinate Cu cation: histidine 480, histidine 483, and histidine 485. A glycan (N-linked (GlcNAc...) asparagine) is linked at asparagine 500. Residues histidine 542, cysteine 543, histidine 544, and histidine 548 each coordinate Cu cation.

It belongs to the multicopper oxidase family. The cofactor is Cu cation.

It localises to the secreted. The protein resides in the extracellular space. Its subcellular location is the apoplast. It catalyses the reaction 4 hydroquinone + O2 = 4 benzosemiquinone + 2 H2O. Its function is as follows. Lignin degradation and detoxification of lignin-derived products. The chain is Laccase-24 (LAC24) from Oryza sativa subsp. japonica (Rice).